A 368-amino-acid chain; its full sequence is Hydrophobic dipeptide epimerase (368 aa).

Substrate is bound by residues Thr-143 and 168–170; that span reads KIK. Mg(2+) contacts are provided by Asp-197, Glu-225, and Asp-253. Substrate contacts are provided by residues Lys-277 and 329 to 331; that span reads DMD.

The protein belongs to the mandelate racemase/muconate lactonizing enzyme family. It depends on Mg(2+) as a cofactor.

In terms of biological role, catalyzes the epimerization of various hydrophobic dipeptides, such as L-Ala-L-Phe. Has epimerase activity with L-Ala-L-Thr, L-Ala-L-Met, L-Ala-L-Tyr, as well as L-Phe-L-Met, L-Phe-L-Ser and L-Phe-L-Thr (in vitro). The polypeptide is Hydrophobic dipeptide epimerase (Citrifermentans bemidjiense (strain ATCC BAA-1014 / DSM 16622 / JCM 12645 / Bem) (Geobacter bemidjiensis)).